Reading from the N-terminus, the 802-residue chain is Ras GTPase-activating protein 4 (802 aa).

2 C2 domains span residues 1–105 and 116–232; these read MAKR…SGWT and VQGE…EGWF. Ca(2+) is bound by residues Asp-21, Asp-27, Asp-74, Asp-76, Ser-79, Asp-82, Asp-149, Asp-155, Asp-202, Asp-204, Ser-207, and Asp-210. Residues 317–545 form the Ras-GAP domain; that stretch reads GLAKDFLDLL…AQLKDFIMKL (229 aa). One can recognise a PH domain in the interval 565–672; sequence PPVKEGPLFI…WLSALRKAST (108 aa). The segment at 674–710 adopts a Btk-type zinc-finger fold; the sequence is NRGLLRSYHPGIFRGDKWSCCHQKDKTDQGCDKTHSR. Zn(2+) is bound by residues His-682, Cys-693, Cys-694, and Cys-704.

Requires Ca(2+) as cofactor. In terms of tissue distribution, isoform 2 is expressed in osteoblasts.

The protein resides in the cytoplasm. It localises to the cytosol. It is found in the cell membrane. In terms of biological role, ca(2+)-dependent Ras GTPase-activating protein, that switches off the Ras-MAPK pathway following a stimulus that elevates intracellular calcium. Functions as an adaptor for Cdc42 and Rac1 during FcR-mediated phagocytosis. Isoform 2 activates the Ras pathway and promotes RANKL shedding by modulating the expression of MMP14. This is Ras GTPase-activating protein 4 (Rasa4) from Mus musculus (Mouse).